Reading from the N-terminus, the 474-residue chain is PTS system sucrose-specific EIIBC component (474 aa).

The PTS EIIB type-1 domain occupies 4–87; it reads SQIAQQVIDK…SKLLGIGDMT (84 aa). The Phosphocysteine intermediate; for EIIB activity role is filled by Cys-26. Positions 107-474 constitute a PTS EIIC type-1 domain; the sequence is KGLADIFVPI…LGKRAQLKAE (368 aa). The next 10 membrane-spanning stretches (helical) occupy residues 109–129, 158–178, 182–202, 229–249, 264–284, 303–323, 345–365, 376–396, 403–423, and 444–464; these read LADI…LMGI, FINT…GFSA, FGGN…PALS, VGYQ…ATLE, ITPL…IGPI, LGFV…ITGM, FIFP…LGAA, IAVP…MFGV, PFIS…LFNV, and LAMY…LTVI.

The protein resides in the cell inner membrane. The enzyme catalyses N(pros)-phospho-L-histidyl-[protein](out) + sucrose = sucrose 6(G)-phosphate(in) + L-histidyl-[protein]. Its function is as follows. The phosphoenolpyruvate-dependent sugar phosphotransferase system (sugar PTS), a major carbohydrate active transport system, catalyzes the phosphorylation of incoming sugar substrates concomitantly with their translocation across the cell membrane. This system is involved in sucrose transport. The protein is PTS system sucrose-specific EIIBC component (scrA) of Pasteurella multocida (strain Pm70).